The sequence spans 100 residues: Large ribosomal subunit protein bL21 (100 aa).

This sequence belongs to the bacterial ribosomal protein bL21 family. As to quaternary structure, part of the 50S ribosomal subunit. Contacts protein L20.

This protein binds to 23S rRNA in the presence of protein L20. This is Large ribosomal subunit protein bL21 from Wolbachia pipientis subsp. Culex pipiens (strain wPip).